A 141-amino-acid chain; its full sequence is Actin-depolymerizing factor 9 (141 aa).

Ser8 is modified (phosphoserine). The ADF-H domain occupies 8–141; the sequence is SGMWMTDDCK…GFDKIQDRAK (134 aa).

Belongs to the actin-binding proteins ADF family.

It localises to the cytoplasm. The protein resides in the cytoskeleton. In terms of biological role, does not display typical F-actin depolymerizing activity. Exhibits a high ability to stabilize and cross-link actin filaments. Functions as an actin bundling protein with the highest efficiency under acidic conditions. May play a role in the modulation of levels of histone H3 lysine 4 trimethylation and H3 lysine 9 and 14 acetylation at the FLC locus. This chain is Actin-depolymerizing factor 9 (ADF9), found in Arabidopsis thaliana (Mouse-ear cress).